A 263-amino-acid chain; its full sequence is Methylesterase 4 (263 aa).

Ser84 functions as the Acyl-ester intermediate in the catalytic mechanism. Active-site charge relay system residues include Asp213 and His241.

Belongs to the AB hydrolase superfamily. Methylesterase family.

It carries out the reaction methyl salicylate + H2O = salicylate + methanol + H(+). The protein operates within plant hormone biosynthesis. Its activity is regulated as follows. Esterase activity is down-regulated by salicylic acid (SA). Functionally, methylesterase shown to have carboxylesterase activity and methyl salicylate (MeSA) esterase activity in vitro. The chain is Methylesterase 4 from Arabidopsis thaliana (Mouse-ear cress).